A 197-amino-acid polypeptide reads, in one-letter code: LexA repressor (197 aa).

A DNA-binding region (H-T-H motif) is located at residues 28-47; the sequence is VREIARRFRITPRGAQLHLV. Catalysis depends on for autocatalytic cleavage activity residues Ser-119 and Lys-156.

The protein belongs to the peptidase S24 family. In terms of assembly, homodimer.

The enzyme catalyses Hydrolysis of Ala-|-Gly bond in repressor LexA.. Its function is as follows. Represses a number of genes involved in the response to DNA damage (SOS response), including recA and lexA. In the presence of single-stranded DNA, RecA interacts with LexA causing an autocatalytic cleavage which disrupts the DNA-binding part of LexA, leading to derepression of the SOS regulon and eventually DNA repair. This is LexA repressor from Thermotoga neapolitana.